The primary structure comprises 469 residues: ATP synthase subunit beta (469 aa).

Position 157-164 (157-164) interacts with ATP; that stretch reads GGAGVGKT.

This sequence belongs to the ATPase alpha/beta chains family. As to quaternary structure, F-type ATPases have 2 components, CF(1) - the catalytic core - and CF(0) - the membrane proton channel. CF(1) has five subunits: alpha(3), beta(3), gamma(1), delta(1), epsilon(1). CF(0) has three main subunits: a(1), b(2) and c(9-12). The alpha and beta chains form an alternating ring which encloses part of the gamma chain. CF(1) is attached to CF(0) by a central stalk formed by the gamma and epsilon chains, while a peripheral stalk is formed by the delta and b chains.

Its subcellular location is the cell membrane. The enzyme catalyses ATP + H2O + 4 H(+)(in) = ADP + phosphate + 5 H(+)(out). Its function is as follows. Produces ATP from ADP in the presence of a proton gradient across the membrane. The catalytic sites are hosted primarily by the beta subunits. In Brevibacillus brevis (strain 47 / JCM 6285 / NBRC 100599), this protein is ATP synthase subunit beta.